Here is a 455-residue protein sequence, read N- to C-terminus: Probable transcription factor GLK1 (455 aa).

A compositionally biased stretch (low complexity) spans 145-163 (AAVEAKSSSPSSTTSSSQE). The tract at residues 145–183 (AAVEAKSSSPSSTTSSSQEAESRHKSSSKSSHGKKKAKV) is disordered. Positions 169-181 (KSSSKSSHGKKKA) are enriched in basic residues. Residues 177-236 (GKKKAKVDWTPELHRRFVQAVEQLGIDKAVPSRILEIMGIDSLTRHNIASHLQKYRSHRK) form the HTH myb-type domain. The segment at residues 207–232 (PSRILEIMGIDSLTRHNIASHLQKYR) is a DNA-binding region (H-T-H motif).

As to expression, expressed in leaves.

The protein resides in the nucleus. Functionally, probable transcriptional activator that promotes chloroplast development. Acts as an activator of nuclear photosynthetic genes involved in chlorophyll biosynthesis, light harvesting, and electron transport. This is Probable transcription factor GLK1 (GLK1) from Oryza sativa subsp. japonica (Rice).